The chain runs to 365 residues: Holliday junction branch migration complex subunit RuvB (365 aa).

The large ATPase domain (RuvB-L) stretch occupies residues 1 to 191 (MNFDPIDDFD…FGFTAHMDFY (191 aa)). Residues leucine 30, arginine 31, glycine 72, lysine 75, threonine 76, serine 77, 138-140 (EDF), arginine 181, tyrosine 191, and arginine 228 contribute to the ATP site. Residue threonine 76 participates in Mg(2+) binding. Residues 192–262 (EPEELQQILM…VAQAALAVYD (71 aa)) are small ATPAse domain (RuvB-S). Residues 265 to 365 (QLGLDRLDRS…QATLFDPNGE (101 aa)) are head domain (RuvB-H). Arginine 320 and arginine 325 together coordinate DNA.

Belongs to the RuvB family. As to quaternary structure, homohexamer. Forms an RuvA(8)-RuvB(12)-Holliday junction (HJ) complex. HJ DNA is sandwiched between 2 RuvA tetramers; dsDNA enters through RuvA and exits via RuvB. An RuvB hexamer assembles on each DNA strand where it exits the tetramer. Each RuvB hexamer is contacted by two RuvA subunits (via domain III) on 2 adjacent RuvB subunits; this complex drives branch migration. In the full resolvosome a probable DNA-RuvA(4)-RuvB(12)-RuvC(2) complex forms which resolves the HJ.

It localises to the cytoplasm. It carries out the reaction ATP + H2O = ADP + phosphate + H(+). The RuvA-RuvB-RuvC complex processes Holliday junction (HJ) DNA during genetic recombination and DNA repair, while the RuvA-RuvB complex plays an important role in the rescue of blocked DNA replication forks via replication fork reversal (RFR). RuvA specifically binds to HJ cruciform DNA, conferring on it an open structure. The RuvB hexamer acts as an ATP-dependent pump, pulling dsDNA into and through the RuvAB complex. RuvB forms 2 homohexamers on either side of HJ DNA bound by 1 or 2 RuvA tetramers; 4 subunits per hexamer contact DNA at a time. Coordinated motions by a converter formed by DNA-disengaged RuvB subunits stimulates ATP hydrolysis and nucleotide exchange. Immobilization of the converter enables RuvB to convert the ATP-contained energy into a lever motion, pulling 2 nucleotides of DNA out of the RuvA tetramer per ATP hydrolyzed, thus driving DNA branch migration. The RuvB motors rotate together with the DNA substrate, which together with the progressing nucleotide cycle form the mechanistic basis for DNA recombination by continuous HJ branch migration. Branch migration allows RuvC to scan DNA until it finds its consensus sequence, where it cleaves and resolves cruciform DNA. This chain is Holliday junction branch migration complex subunit RuvB, found in Rhodococcus erythropolis (strain PR4 / NBRC 100887).